We begin with the raw amino-acid sequence, 138 residues long: Basic phospholipase A2 myotoxin I (138 aa).

The signal sequence occupies residues 1–16 (MRTLWIMAVLLVGVEG). 7 disulfide bridges follow: Cys42-Cys131, Cys44-Cys60, Cys59-Cys111, Cys65-Cys138, Cys66-Cys104, Cys73-Cys97, and Cys91-Cys102. Ca(2+) contacts are provided by Tyr43, Gly45, and Gly47. The active site involves His63. Position 64 (Asp64) interacts with Ca(2+). Residue Asp105 is part of the active site.

It belongs to the phospholipase A2 family. Group II subfamily. D49 sub-subfamily. In terms of assembly, monomer. Homodimer; non-covalently linked (alternative/compact dimer conformation). The cofactor is Ca(2+). In terms of tissue distribution, expressed by the venom gland.

The protein resides in the secreted. It carries out the reaction a 1,2-diacyl-sn-glycero-3-phosphocholine + H2O = a 1-acyl-sn-glycero-3-phosphocholine + a fatty acid + H(+). High level of membrane cholesterol content reduces cytolytic activity, whereas low level of membrane cholesterol content increases cytolytic activity. Functionally, snake venom phospholipase A2 (PLA2) that displays local myotoxic activity. It also displays anticoagulant action in plasma and edema-inducing activities. In addition, it shows cytotoxic activity to a variety of cell types and bactericidal activity to a variety of Gram-negative and Gram-positive bacteria. PLA2 catalyzes the calcium-dependent hydrolysis of the 2-acyl groups in 3-sn-phosphoglycerides. The protein is Basic phospholipase A2 myotoxin I of Bothrops asper (Terciopelo).